Consider the following 1165-residue polypeptide: Valine--tRNA ligase (1165 aa).

A 'HIGH' region motif is present at residues 43 to 53 (PNVTGSLHMGH). The 'KMSKS' region signature appears at 800–804 (KMSKT). Residue Lys-803 participates in ATP binding. Coiled coils occupy residues 1001–1032 (KNED…SDLQ) and 1097–1165 (HVDL…VLRS).

It belongs to the class-I aminoacyl-tRNA synthetase family. ValS type 1 subfamily. Monomer.

Its subcellular location is the cytoplasm. It carries out the reaction tRNA(Val) + L-valine + ATP = L-valyl-tRNA(Val) + AMP + diphosphate. Catalyzes the attachment of valine to tRNA(Val). As ValRS can inadvertently accommodate and process structurally similar amino acids such as threonine, to avoid such errors, it has a 'posttransfer' editing activity that hydrolyzes mischarged Thr-tRNA(Val) in a tRNA-dependent manner. The chain is Valine--tRNA ligase from Aquifex aeolicus (strain VF5).